An 82-amino-acid polypeptide reads, in one-letter code: Turripeptide OL139 (82 aa).

The tract at residues H58–A82 is disordered.

Post-translationally, contains 6 disulfide bonds. In terms of tissue distribution, expressed by the venom duct.

The protein resides in the secreted. In terms of biological role, acts as a neurotoxin by inhibiting an ion channel. This chain is Turripeptide OL139, found in Iotyrris olangoensis (Sea snail).